We begin with the raw amino-acid sequence, 106 residues long: ATP-dependent Clp protease adapter protein ClpS (106 aa).

Belongs to the ClpS family. In terms of assembly, binds to the N-terminal domain of the chaperone ClpA.

Its function is as follows. Involved in the modulation of the specificity of the ClpAP-mediated ATP-dependent protein degradation. The polypeptide is ATP-dependent Clp protease adapter protein ClpS (Yersinia enterocolitica serotype O:8 / biotype 1B (strain NCTC 13174 / 8081)).